Here is a 498-residue protein sequence, read N- to C-terminus: Guanosine-5'-triphosphate,3'-diphosphate pyrophosphatase (498 aa).

It belongs to the GppA/Ppx family. GppA subfamily.

The catalysed reaction is guanosine 3'-diphosphate 5'-triphosphate + H2O = guanosine 3',5'-bis(diphosphate) + phosphate + H(+). The protein operates within purine metabolism; ppGpp biosynthesis; ppGpp from GTP: step 2/2. In terms of biological role, catalyzes the conversion of pppGpp to ppGpp. Guanosine pentaphosphate (pppGpp) is a cytoplasmic signaling molecule which together with ppGpp controls the 'stringent response', an adaptive process that allows bacteria to respond to amino acid starvation, resulting in the coordinated regulation of numerous cellular activities. This chain is Guanosine-5'-triphosphate,3'-diphosphate pyrophosphatase, found in Pectobacterium atrosepticum (strain SCRI 1043 / ATCC BAA-672) (Erwinia carotovora subsp. atroseptica).